The primary structure comprises 376 residues: Succinyl-diaminopimelate desuccinylase (376 aa).

A Zn(2+)-binding site is contributed by His67. Asp69 is a catalytic residue. Asp100 is a Zn(2+) binding site. Glu134 (proton acceptor) is an active-site residue. Residues Glu135, Glu163, and His349 each contribute to the Zn(2+) site.

The protein belongs to the peptidase M20A family. DapE subfamily. In terms of assembly, homodimer. Requires Zn(2+) as cofactor. Co(2+) serves as cofactor.

The catalysed reaction is N-succinyl-(2S,6S)-2,6-diaminopimelate + H2O = (2S,6S)-2,6-diaminopimelate + succinate. The protein operates within amino-acid biosynthesis; L-lysine biosynthesis via DAP pathway; LL-2,6-diaminopimelate from (S)-tetrahydrodipicolinate (succinylase route): step 3/3. Its function is as follows. Catalyzes the hydrolysis of N-succinyl-L,L-diaminopimelic acid (SDAP), forming succinate and LL-2,6-diaminopimelate (DAP), an intermediate involved in the bacterial biosynthesis of lysine and meso-diaminopimelic acid, an essential component of bacterial cell walls. This chain is Succinyl-diaminopimelate desuccinylase, found in Shewanella sediminis (strain HAW-EB3).